A 30-amino-acid polypeptide reads, in one-letter code: Bacteriocin plantaricin KL-1Y (30 aa).

It is found in the secreted. Its function is as follows. Bacteriocin with activity against species of Lactobacillus, Lactococcus, Pediococcus, Leuconostoc and against B.subtilis and, to a lesser extent, against B.coagulans, B.cereus and species of Enterococcus, Listeria, Kocuria, Staphylococcus, Corynebacterium, Salmonella, Pseudomonas and Escherichia. The polypeptide is Bacteriocin plantaricin KL-1Y (Lactiplantibacillus plantarum (Lactobacillus plantarum)).